We begin with the raw amino-acid sequence, 254 residues long: Urease accessory protein UreF (254 aa).

Basic and acidic residues predominate over residues Met-1–Glu-11. Residues Met-1–Asn-26 form a disordered region.

It belongs to the UreF family. In terms of assembly, ureH, UreF and UreG form a complex that acts as a GTP-hydrolysis-dependent molecular chaperone, activating the urease apoprotein by helping to assemble the nickel containing metallocenter of UreC. The UreE protein probably delivers the nickel.

It localises to the cytoplasm. Required for maturation of urease via the functional incorporation of the urease nickel metallocenter. The protein is Urease accessory protein UreF of Helicobacter pylori (strain ATCC 700392 / 26695) (Campylobacter pylori).